The sequence spans 287 residues: Probable ketose 3-epimerase (287 aa).

Glu-152 acts as the Proton donor/acceptor in catalysis. Mn(2+) is bound by residues Glu-152 and Asp-185. His-188 is a binding site for substrate. Mn(2+) is bound at residue His-211. Arg-217 serves as a coordination point for substrate. The Proton donor/acceptor role is filled by Glu-246. Glu-246 contributes to the Mn(2+) binding site.

This sequence belongs to the hyi family. Mn(2+) serves as cofactor.

In terms of biological role, probably catalyzes the epimerization of ketopentoses and/or ketohexoses at the C3 position. This Synechocystis sp. (strain ATCC 27184 / PCC 6803 / Kazusa) protein is Probable ketose 3-epimerase.